The chain runs to 186 residues: Protein YABBY 2 (186 aa).

The segment at 17–44 adopts a C4-type zinc-finger fold; it reads CNFCNTIFAVSVPSNSMLNIVTVRCGHC.

The protein belongs to the YABBY family. As to expression, expressed in leaf blades, leaf sheaths and flowers.

It localises to the nucleus. This Oryza sativa subsp. japonica (Rice) protein is Protein YABBY 2 (YAB2).